A 388-amino-acid polypeptide reads, in one-letter code: uncharacterized protein (388 aa).

The stretch at 68-96 (KVDRMSEEEERMAIATRKAKEVAKELSET) forms a coiled coil. Positions 162-388 (GSHPLVREFN…PPQQDWFDSV (227 aa)) are disordered. Composition is skewed to basic and acidic residues over residues 166–176 (LVREFNGEKPP) and 196–208 (ATDK…QSDK). The span at 233 to 251 (GVKHQHAIRRDDRHRHGMR) shows a compositional bias: basic residues. 2 stretches are compositionally biased toward low complexity: residues 265 to 279 (QQQQ…SRGQ) and 293 to 346 (QRRP…QRPA).

This is an uncharacterized protein from Frog virus 3 (isolate Goorha) (FV-3).